The sequence spans 193 residues: Putative manganese efflux pump MntP (193 aa).

The next 6 helical transmembrane spans lie at 8–28 (LLAI…GIIL), 37–57 (LVMA…GWMF), 61–81 (FSHL…AFLG), 109–129 (MAIA…LLGI), 138–158 (PILI…YFGI), and 172–192 (LWGG…HLFL).

The protein belongs to the MntP (TC 9.B.29) family.

Its subcellular location is the cell inner membrane. Functionally, probably functions as a manganese efflux pump. This is Putative manganese efflux pump MntP from Bacteroides thetaiotaomicron (strain ATCC 29148 / DSM 2079 / JCM 5827 / CCUG 10774 / NCTC 10582 / VPI-5482 / E50).